Consider the following 462-residue polypeptide: Light-independent protochlorophyllide reductase subunit N (462 aa).

Residues Cys-24, Cys-49, and Cys-109 each contribute to the [4Fe-4S] cluster site.

Belongs to the BchN/ChlN family. In terms of assembly, protochlorophyllide reductase is composed of three subunits; ChlL, ChlN and ChlB. Forms a heterotetramer of two ChlB and two ChlN subunits. [4Fe-4S] cluster is required as a cofactor.

Its subcellular location is the plastid. The protein localises to the chloroplast. The catalysed reaction is chlorophyllide a + oxidized 2[4Fe-4S]-[ferredoxin] + 2 ADP + 2 phosphate = protochlorophyllide a + reduced 2[4Fe-4S]-[ferredoxin] + 2 ATP + 2 H2O. It functions in the pathway porphyrin-containing compound metabolism; chlorophyll biosynthesis (light-independent). Functionally, component of the dark-operative protochlorophyllide reductase (DPOR) that uses Mg-ATP and reduced ferredoxin to reduce ring D of protochlorophyllide (Pchlide) to form chlorophyllide a (Chlide). This reaction is light-independent. The NB-protein (ChlN-ChlB) is the catalytic component of the complex. The chain is Light-independent protochlorophyllide reductase subunit N from Pleurastrum terricola (Filamentous green alga).